We begin with the raw amino-acid sequence, 795 residues long: Phenylalanine--tRNA ligase beta subunit (795 aa).

Residues 39–148 enclose the tRNA-binding domain; that stretch reads AGQFHGVVVG…IDAPLGVDLR (110 aa). A B5 domain is found at 401-476; sequence PQSATITLRR…RIYGYNNIPD (76 aa). Residues D454, D460, E463, and E464 each coordinate Mg(2+). An FDX-ACB domain is found at 701 to 794; it reads SRFPSNRRDI…LKQRFQASLR (94 aa).

The protein belongs to the phenylalanyl-tRNA synthetase beta subunit family. Type 1 subfamily. In terms of assembly, tetramer of two alpha and two beta subunits. Requires Mg(2+) as cofactor.

The protein localises to the cytoplasm. The enzyme catalyses tRNA(Phe) + L-phenylalanine + ATP = L-phenylalanyl-tRNA(Phe) + AMP + diphosphate + H(+). This is Phenylalanine--tRNA ligase beta subunit from Photorhabdus laumondii subsp. laumondii (strain DSM 15139 / CIP 105565 / TT01) (Photorhabdus luminescens subsp. laumondii).